The primary structure comprises 224 residues: Pyridoxal 5'-phosphate synthase subunit PdxT (224 aa).

Residue G55 to S57 participates in L-glutamine binding. Catalysis depends on C87, which acts as the Nucleophile. L-glutamine contacts are provided by residues R113 and I142 to R143. Residues H178 and E180 each act as charge relay system in the active site.

Belongs to the glutaminase PdxT/SNO family. In terms of assembly, in the presence of PdxS, forms a dodecamer of heterodimers. Only shows activity in the heterodimer.

The enzyme catalyses aldehydo-D-ribose 5-phosphate + D-glyceraldehyde 3-phosphate + L-glutamine = pyridoxal 5'-phosphate + L-glutamate + phosphate + 3 H2O + H(+). The catalysed reaction is L-glutamine + H2O = L-glutamate + NH4(+). Its pathway is cofactor biosynthesis; pyridoxal 5'-phosphate biosynthesis. Catalyzes the hydrolysis of glutamine to glutamate and ammonia as part of the biosynthesis of pyridoxal 5'-phosphate. The resulting ammonia molecule is channeled to the active site of PdxS. The polypeptide is Pyridoxal 5'-phosphate synthase subunit PdxT (Syntrophus aciditrophicus (strain SB)).